The following is a 616-amino-acid chain: Dihydroxy-acid dehydratase (616 aa).

Residue Asp-81 participates in Mg(2+) binding. Cys-122 serves as a coordination point for [2Fe-2S] cluster. Mg(2+) contacts are provided by Asp-123 and Lys-124. Lys-124 bears the N6-carboxylysine mark. A [2Fe-2S] cluster-binding site is contributed by Cys-195. Glu-491 contacts Mg(2+). Catalysis depends on Ser-517, which acts as the Proton acceptor.

This sequence belongs to the IlvD/Edd family. Homodimer. The cofactor is [2Fe-2S] cluster. Requires Mg(2+) as cofactor.

It catalyses the reaction (2R)-2,3-dihydroxy-3-methylbutanoate = 3-methyl-2-oxobutanoate + H2O. It carries out the reaction (2R,3R)-2,3-dihydroxy-3-methylpentanoate = (S)-3-methyl-2-oxopentanoate + H2O. It participates in amino-acid biosynthesis; L-isoleucine biosynthesis; L-isoleucine from 2-oxobutanoate: step 3/4. Its pathway is amino-acid biosynthesis; L-valine biosynthesis; L-valine from pyruvate: step 3/4. Functionally, functions in the biosynthesis of branched-chain amino acids. Catalyzes the dehydration of (2R,3R)-2,3-dihydroxy-3-methylpentanoate (2,3-dihydroxy-3-methylvalerate) into 2-oxo-3-methylpentanoate (2-oxo-3-methylvalerate) and of (2R)-2,3-dihydroxy-3-methylbutanoate (2,3-dihydroxyisovalerate) into 2-oxo-3-methylbutanoate (2-oxoisovalerate), the penultimate precursor to L-isoleucine and L-valine, respectively. The chain is Dihydroxy-acid dehydratase from Shigella flexneri.